The primary structure comprises 318 residues: Magnetosome protein MamM (318 aa).

Residues 1–210 are transmembrane domain (TMD); it reads MRKSGCTVCS…FMDAYRGLMD (210 aa). The next 4 helical transmembrane spans lie at 13–33, 39–59, 81–101, and 117–137; these read IGWVGLAVNTVLMVMKAFVGL, AMLADAMYSLKDMLNALMVVI, FILSMVVSVVFIGLTGYLLVH, and LIVLWAALVSVGVNVAMYFYS. The tract at residues 211-318 is C-terminal domain (CTD); that stretch reads HTAGEAVQNR…DEVMLSKVDN (108 aa). Fe cation is bound by residues Asp249, His264, His285, and Glu289.

It belongs to the cation diffusion facilitator (CDF) transporter (TC 2.A.4) family. Forms homodimers via its C-terminal domain (CTD) in the presence of metal cations. Interacts with MamB via their CTD.

It is found in the magnetosome membrane. The protein localises to the cell inner membrane. In terms of biological role, probably plays a role in biomineralization. Required for stable accumulation of MamB. Probably binds and transports iron. May nucleate iron crystal formation. The polypeptide is Magnetosome protein MamM (mamM) (Paramagnetospirillum magneticum (strain ATCC 700264 / AMB-1) (Magnetospirillum magneticum)).